The primary structure comprises 154 residues: Cyanate hydratase (154 aa).

Active-site residues include Arg100, Glu103, and Ser126.

This sequence belongs to the cyanase family.

The catalysed reaction is cyanate + hydrogencarbonate + 3 H(+) = NH4(+) + 2 CO2. Catalyzes the reaction of cyanate with bicarbonate to produce ammonia and carbon dioxide. The protein is Cyanate hydratase of Aspergillus fumigatus (strain ATCC MYA-4609 / CBS 101355 / FGSC A1100 / Af293) (Neosartorya fumigata).